The following is a 251-amino-acid chain: Small ribosomal subunit protein uS3 (251 aa).

The region spanning 22–93 (LNEFFTRELA…GIAIYAERVE (72 aa)) is the KH type-2 domain. Residues 223–251 (TVKSYKQTAEDETETDAPVEAEAEVEATA) form a disordered region. Positions 232–251 (EDETETDAPVEAEAEVEATA) are enriched in acidic residues.

The protein belongs to the universal ribosomal protein uS3 family. As to quaternary structure, component of the small ribosomal subunit. Mature ribosomes consist of a small (40S) and a large (60S) subunit. The 40S subunit contains about 32 different proteins and 1 molecule of RNA (18S). The 60S subunit contains 45 different proteins and 3 molecules of RNA (25S, 5.8S and 5S).

It localises to the cytoplasm. Component of the ribosome, a large ribonucleoprotein complex responsible for the synthesis of proteins in the cell. The small ribosomal subunit (SSU) binds messenger RNAs (mRNAs) and translates the encoded message by selecting cognate aminoacyl-transfer RNA (tRNA) molecules. The large subunit (LSU) contains the ribosomal catalytic site termed the peptidyl transferase center (PTC), which catalyzes the formation of peptide bonds, thereby polymerizing the amino acids delivered by tRNAs into a polypeptide chain. The nascent polypeptides leave the ribosome through a tunnel in the LSU and interact with protein factors that function in enzymatic processing, targeting, and the membrane insertion of nascent chains at the exit of the ribosomal tunnel. The protein is Small ribosomal subunit protein uS3 (RPS3) of Candida albicans (strain SC5314 / ATCC MYA-2876) (Yeast).